The primary structure comprises 454 residues: Exodeoxyribonuclease 7 large subunit (454 aa).

Low complexity predominate over residues 337 to 352 (ANQRQQRASQRLRQQN). The segment at 337 to 359 (ANQRQQRASQRLRQQNPQPRIHR) is disordered.

This sequence belongs to the XseA family. Heterooligomer composed of large and small subunits.

The protein resides in the cytoplasm. The catalysed reaction is Exonucleolytic cleavage in either 5'- to 3'- or 3'- to 5'-direction to yield nucleoside 5'-phosphates.. Bidirectionally degrades single-stranded DNA into large acid-insoluble oligonucleotides, which are then degraded further into small acid-soluble oligonucleotides. This is Exodeoxyribonuclease 7 large subunit from Salmonella arizonae (strain ATCC BAA-731 / CDC346-86 / RSK2980).